The sequence spans 411 residues: LL-diaminopimelate aminotransferase (411 aa).

Residues Tyr15 and Gly42 each coordinate substrate. Residues Tyr72, 108–109 (SK), Tyr132, Asn187, Tyr218, and 246–248 (SFS) each bind pyridoxal 5'-phosphate. Substrate contacts are provided by Lys109, Tyr132, and Asn187. N6-(pyridoxal phosphate)lysine is present on Lys249. Arg257 and Asn292 together coordinate pyridoxal 5'-phosphate. 2 residues coordinate substrate: Asn292 and Arg388.

It belongs to the class-I pyridoxal-phosphate-dependent aminotransferase family. LL-diaminopimelate aminotransferase subfamily. In terms of assembly, homodimer. It depends on pyridoxal 5'-phosphate as a cofactor.

The catalysed reaction is (2S,6S)-2,6-diaminopimelate + 2-oxoglutarate = (S)-2,3,4,5-tetrahydrodipicolinate + L-glutamate + H2O + H(+). It participates in amino-acid biosynthesis; L-lysine biosynthesis via DAP pathway; LL-2,6-diaminopimelate from (S)-tetrahydrodipicolinate (aminotransferase route): step 1/1. Functionally, involved in the synthesis of meso-diaminopimelate (m-DAP or DL-DAP), required for both lysine and peptidoglycan biosynthesis. Catalyzes the direct conversion of tetrahydrodipicolinate to LL-diaminopimelate. This chain is LL-diaminopimelate aminotransferase, found in Gloeothece citriformis (strain PCC 7424) (Cyanothece sp. (strain PCC 7424)).